A 326-amino-acid chain; its full sequence is Ornithine carbamoyltransferase (326 aa).

Carbamoyl phosphate-binding positions include 57–60 (STRT), Gln84, Arg108, and 135–138 (HPTQ). L-ornithine-binding positions include Asn169, Asp233, and 237 to 238 (SM). 275 to 276 (CL) serves as a coordination point for carbamoyl phosphate.

This sequence belongs to the aspartate/ornithine carbamoyltransferase superfamily. OTCase family.

The protein resides in the cytoplasm. The catalysed reaction is carbamoyl phosphate + L-ornithine = L-citrulline + phosphate + H(+). It functions in the pathway amino-acid biosynthesis; L-arginine biosynthesis; L-arginine from L-ornithine and carbamoyl phosphate: step 1/3. Reversibly catalyzes the transfer of the carbamoyl group from carbamoyl phosphate (CP) to the N(epsilon) atom of ornithine (ORN) to produce L-citrulline. The polypeptide is Ornithine carbamoyltransferase (Escherichia coli O6:K15:H31 (strain 536 / UPEC)).